Consider the following 540-residue polypeptide: Lysosomal cobalamin transport escort protein LMBD1 (540 aa).

Residues 1-10 are Extracellular-facing; it reads MATSGAASAE. The chain crosses the membrane as a helical span at residues 11-31; the sequence is LVIGWCIFGLLLLAILAFCWI. Residues 32–50 lie on the Cytoplasmic side of the membrane; the sequence is YVRKYQSRRESEVVSTITA. A helical transmembrane segment spans residues 51–71; the sequence is IFSLAIALITSALLPVDIFLV. At 72–100 the chain is on the extracellular side; it reads SYMKNQNGTFKDWANANVSRQIEDTVLYG. Residues N78 and N88 are each glycosylated (N-linked (GlcNAc...) asparagine). Residues 101–121 traverse the membrane as a helical segment; the sequence is YYTLYSVILFCVFFWIPFVYF. At 122-144 the chain is on the cytoplasmic side; sequence YYEEKDDDDTSKCTQIKTALKYT. The chain crosses the membrane as a helical span at residues 145-165; it reads LGFVVICALLLLVGAFVPLNV. Over 166–188 the chain is Extracellular; sequence PNNKNSTEWEKVKSLFEELGSSH. The N-linked (GlcNAc...) asparagine glycan is linked to N170. Residues 189–209 form a helical membrane-spanning segment; it reads GLAALSFSISSLTLIGMLAAI. Topologically, residues 210 to 305 are cytoplasmic; the sequence is TYTAYGMSAL…KFCGALRPLK (96 aa). The YERL motif; mediates interaction with adapter protein complex 2 and is essential for its function in clathrin-mediated endocytosis of INSR signature appears at 232 to 235; the sequence is YERL. A Phosphothreonine modification is found at T238. Positions 294 to 297 match the WTKF motif; mediates interaction with adapter protein complex 2 and is essential for its function in clathrin-mediated endocytosis of INSR motif; that stretch reads WTKF. The helical transmembrane segment at 306–326 threads the bilayer; the sequence is IVWGIFFILVALLFVISLFLS. Over 327-364 the chain is Extracellular; sequence NLDKALHSAGIDSGFIIFGANLSNPLNMLLPLLQTVFP. An N-linked (GlcNAc...) asparagine glycan is attached at N347. A helical transmembrane segment spans residues 365–385; that stretch reads LDYILITIIIMYFIFTSMAGI. The Cytoplasmic segment spans residues 386–408; it reads RNIGIWFFWIRLYKIRRGRTRPQ. The chain crosses the membrane as a helical span at residues 409-429; that stretch reads ALLFLCMILLLIVLHTSYMIY. The Extracellular portion of the chain corresponds to 430–486; that stretch reads SLAPQYVMYGSQNYLIETNITSDNHKGNSTLSVPKRCDADAPEDQCTVTRTYLFLHK. Residues N448 and N457 are each glycosylated (N-linked (GlcNAc...) asparagine). Residues 487-507 form a helical membrane-spanning segment; that stretch reads FWFFSAAYYFGNWAFLGVFLI. The Cytoplasmic segment spans residues 508–540; sequence GLIVSCCKGKKSVIEGVDEDSDISDDEPSVYSA. Residues S528 and S531 each carry the phosphoserine modification.

This sequence belongs to the LIMR family. LMBRD1 subfamily. In terms of assembly, (Microbial infection) Interacts with hepatitis delta virus NES (HDAg-L). Interacts with ABCD4; this interaction induces the translocation of ABCD4 from the endoplasmic reticulum to the lysosome. Interacts with ABCD4 and MMACHC; this interaction ensures the transport of cobalamin from the lysosome to the cytoplasm. Interacts with INSR, adapter protein complex 2 and clathrin heavy chain. N-glycosylated. Isoform 3 is expressed in liver.

The protein localises to the endoplasmic reticulum membrane. The protein resides in the lysosome membrane. It is found in the cell membrane. Its subcellular location is the cytoplasmic vesicle. It localises to the clathrin-coated vesicle. Functionally, lysosomal membrane chaperone required to export cobalamin (vitamin B12) from the lysosome to the cytosol, allowing its conversion to cofactors. Targets ABCD4 transporter from the endoplasmic reticulum to the lysosome. Then forms a complex with lysosomal ABCD4 and cytoplasmic MMACHC to transport cobalamin across the lysosomal membrane. Acts as an adapter protein which plays an important role in mediating and regulating the internalization of the insulin receptor (INSR). Involved in clathrin-mediated endocytosis of INSR via its interaction with adapter protein complex 2. Essential for the initiation of gastrulation and early formation of mesoderm structures during embryogenesis. Its function is as follows. (Microbial infection) May play a role in the assembly of hepatitis delta virus (HDV). This chain is Lysosomal cobalamin transport escort protein LMBD1, found in Homo sapiens (Human).